The chain runs to 573 residues: MSQTSLKHKKKNEPGMRYSKESLDAEKRKDSDKTGARLSTQGSQELPLHNTDSRGYVVRNQWSRTSRSPSTGAPSVDEPRSRNTAIKVEAPNSSTTSRTSSASPSQHETSPPPQTSEKSSIQQTPQNRPITQLESQPPTPPETEPNSRRTSAKMYTGSDPWAHRENREPRDLQLRDYAYSCDSREGMPKTREYPRTPPTEWKPYAQRRLQYGTSVDMEPEYISDGPQQRQRQQTEEDEVDEAYWTSVSMLYEKIPSCARPRPPKPKHAITIAVSSRALFNMVDDRKIYEEEGLEKYMEYQLTNENVILTPGPAFRFVKALQHVNSRLRDLYPDEQDLFDIVLMTNNHAQVGVRLINSVNHYGLLIDRFCLTGGKSPIGYLKAYLTNLYLSADSEKVQEAIKEGIASATMYAGAKDMAYCDTQLRVAFDGDAVLFSDESEHIAKDHGLDKFFQHETLFENKPLAQGPLKSFLEDLGKLQKKFYAKDERLLCPIRTYLVTARSAASSGARVLKTLRRWGLEIDEALFLAGAPKGPILVKIRPHIFFDDQMFHIESAQKFGTITAHVPYGIAQKRN.

Basic residues predominate over residues 1–11 (MSQTSLKHKKK). Disordered regions lie at residues 1–200 (MSQT…PPTE) and 218–238 (EPEY…EEDE). A compositionally biased stretch (basic and acidic residues) spans 12-35 (NEPGMRYSKESLDAEKRKDSDKTG). A compositionally biased stretch (polar residues) spans 60–73 (NQWSRTSRSPSTGA). Positions 93 to 105 (SSTTSRTSSASPS) are enriched in low complexity. Residues 115–136 (TSEKSSIQQTPQNRPITQLESQ) are compositionally biased toward polar residues. 2 stretches are compositionally biased toward basic and acidic residues: residues 161–174 (WAHR…DLQL) and 182–194 (DSRE…REYP). Asp-428 serves as the catalytic Nucleophile.

The protein belongs to the 5'-nucleotidase type 3 family. Mg(2+) serves as cofactor. Expressed at highest levels in testis. Also expressed in brain, skeletal muscle, kidney and heart.

Its subcellular location is the cytoplasm. The enzyme catalyses a ribonucleoside 5'-phosphate + H2O = a ribonucleoside + phosphate. The catalysed reaction is AMP + H2O = adenosine + phosphate. Activated by ADP. Functionally, catalyzes the hydrolysis of nucleotide monophosphates, releasing inorganic phosphate and the corresponding nucleoside, AMP is the major substrate. This chain is Cytosolic 5'-nucleotidase 1B (Nt5c1b), found in Mus musculus (Mouse).